Here is a 422-residue protein sequence, read N- to C-terminus: Receptor homology region, transmembrane domain- and RING domain-containing protein 3 (422 aa).

Positions 1 to 22 (MNLVVLLILTLLLFIVSYVVDA) are cleaved as a signal peptide. Residues 23–168 (GQVILVDSNI…NTEDSVWSLY (146 aa)) lie on the Lumenal side of the membrane. N-linked (GlcNAc...) asparagine glycosylation occurs at asparagine 31. Residues cysteine 64 and cysteine 89 are joined by a disulfide bond. In terms of domain architecture, PA spans 81 to 146 (LVLIIRGGCS…RAGEMLKKYA (66 aa)). A helical membrane pass occupies residues 169-189 (ASIALILSLAIFCVMVTCVFF). The Cytoplasmic segment spans residues 190 to 422 (YRYCSTIRNS…HFASAHSLPD (233 aa)). Residues 232–274 (CAICLEDYIVGDKLRVLPCSHKFHVACVDSWLISWRTFCPVCK) form an RING-type; atypical zinc finger. The tract at residues 344-368 (LRRQASPLQSSSQRSHLSMKSSHSL) is disordered. Over residues 349-368 (SPLQSSSQRSHLSMKSSHSL) the composition is skewed to polar residues.

It localises to the prevacuolar compartment membrane. It is found in the protein storage vacuole membrane. Its function is as follows. Involved in the trafficking of vacuolar proteins. May function as a sorting receptor for protein trafficking to the protein storage vacuole (PSV). In Arabidopsis thaliana (Mouse-ear cress), this protein is Receptor homology region, transmembrane domain- and RING domain-containing protein 3 (RMR3).